A 62-amino-acid chain; its full sequence is Large ribosomal subunit protein bL35 (62 aa).

The interval 25–62 (EQAYRSHLSQNKTTKQKRQARKSVQMHSSDVKRFKALI) is disordered. The span at 53–62 (SDVKRFKALI) shows a compositional bias: basic and acidic residues.

This sequence belongs to the bacterial ribosomal protein bL35 family.

This Mycoplasmopsis fermentans (Mycoplasma fermentans) protein is Large ribosomal subunit protein bL35.